The chain runs to 977 residues: Disks large-associated protein 3 (977 aa).

Positions 1 to 10 (MRGYHGDRGS) are enriched in basic and acidic residues. Disordered stretches follow at residues 1 to 30 (MRGYHGDRGSHPRPARFADQQHMDVGPAAR), 52 to 90 (AGLGHLSPEGPLSLSEGPSSVGPEGGPGGVGAGGSSSTF), 137 to 167 (FHTLPYQRGPAGPGPGPGSGAAPEARSESPS), 181 to 289 (AKSH…CLDA), 398 to 417 (AMGDEESGDSDGSPKTSPKA), and 529 to 582 (PGSS…SADG). Over residues 53–73 (GLGHLSPEGPLSLSEGPSSVG) the composition is skewed to low complexity. Ser58 bears the Phosphoserine mark. Over residues 74 to 85 (PEGGPGGVGAGG) the composition is skewed to gly residues. Over residues 189 to 201 (PGKRDYNGPKAEG) the composition is skewed to basic and acidic residues. Low complexity predominate over residues 202 to 212 (RSSSGGDSYSG). The span at 221–245 (SHHHHHHHHHHHHQSRHGKRSKSKD) shows a compositional bias: basic residues. The span at 258-271 (GWWSSDDNLDSDSG) shows a compositional bias: low complexity. 4 positions are modified to phosphoserine: Ser404, Ser407, Ser410, and Ser414. The span at 538–547 (APPPIPPGSQ) shows a compositional bias: pro residues. 2 positions are modified to phosphoserine: Ser641 and Ser643. Disordered stretches follow at residues 739 to 788 (EGYP…RTSP) and 906 to 939 (EEKKVPPPIPKKPSRGRGVPVKERSLDSVDRQRQ). Residues 754-763 (PGPPPVPAPG) show a composition bias toward pro residues. 2 stretches are compositionally biased toward basic and acidic residues: residues 767-777 (GRRDSWMERGS) and 925-939 (PVKERSLDSVDRQRQ). 3 positions are modified to phosphoserine: Ser930, Ser933, and Ser965.

Belongs to the SAPAP family. In terms of assembly, interacts with DLG1 and DLG4/PSD-95. Expressed in most brain regions.

The protein localises to the cell membrane. The protein resides in the postsynaptic density. It is found in the synapse. In terms of biological role, may play a role in the molecular organization of synapses and neuronal cell signaling. Could be an adapter protein linking ion channel to the subsynaptic cytoskeleton. May induce enrichment of PSD-95/SAP90 at the plasma membrane. This is Disks large-associated protein 3 (Dlgap3) from Rattus norvegicus (Rat).